The chain runs to 148 residues: Flagellar assembly factor FliW (148 aa).

It belongs to the FliW family. As to quaternary structure, interacts with translational regulator CsrA and flagellin(s).

The protein resides in the cytoplasm. In terms of biological role, acts as an anti-CsrA protein, binds CsrA and prevents it from repressing translation of its target genes, one of which is flagellin. Binds to flagellin and participates in the assembly of the flagellum. The protein is Flagellar assembly factor FliW of Ruminiclostridium cellulolyticum (strain ATCC 35319 / DSM 5812 / JCM 6584 / H10) (Clostridium cellulolyticum).